Here is a 100-residue protein sequence, read N- to C-terminus: uncharacterized protein (100 aa).

A signal peptide spans 1–23; it reads MKYVALAFVLSLVILQISAQVGA.

In terms of tissue distribution, nacreous layer of shell (at protein level). Expressed primarily in the mantle with highest level in the mantle pallium and lower level in the mantle edge.

The protein localises to the secreted. This is an uncharacterized protein from Margaritifera margaritifera (Freshwater pearl mussel).